A 93-amino-acid polypeptide reads, in one-letter code: Pyrimidine/purine nucleoside phosphorylase (93 aa).

The protein belongs to the nucleoside phosphorylase PpnP family.

It catalyses the reaction a purine D-ribonucleoside + phosphate = a purine nucleobase + alpha-D-ribose 1-phosphate. The catalysed reaction is adenosine + phosphate = alpha-D-ribose 1-phosphate + adenine. The enzyme catalyses cytidine + phosphate = cytosine + alpha-D-ribose 1-phosphate. It carries out the reaction guanosine + phosphate = alpha-D-ribose 1-phosphate + guanine. It catalyses the reaction inosine + phosphate = alpha-D-ribose 1-phosphate + hypoxanthine. The catalysed reaction is thymidine + phosphate = 2-deoxy-alpha-D-ribose 1-phosphate + thymine. The enzyme catalyses uridine + phosphate = alpha-D-ribose 1-phosphate + uracil. It carries out the reaction xanthosine + phosphate = alpha-D-ribose 1-phosphate + xanthine. In terms of biological role, catalyzes the phosphorolysis of diverse nucleosides, yielding D-ribose 1-phosphate and the respective free bases. Can use uridine, adenosine, guanosine, cytidine, thymidine, inosine and xanthosine as substrates. Also catalyzes the reverse reactions. The protein is Pyrimidine/purine nucleoside phosphorylase of Vibrio atlanticus (strain LGP32) (Vibrio splendidus (strain Mel32)).